Here is a 107-residue protein sequence, read N- to C-terminus: AGDPDAGQKVFLKCAACHKIGPGAKNGVGPSLNGVANRKAGQAEGFAYSDANKNSGLTWDEATFKEYITAPQKKVPGTKMTFPGLPNEADRDNIWAYLSQFKADGSK.

The heme c site is built by Cys14, Cys17, His18, and Met80.

It belongs to the cytochrome c family. In terms of processing, binds 1 heme c group covalently per subunit.

Cytochrome c2 is found mainly in purple, non-sulfur, photosynthetic bacteria where it functions as the electron donor to the oxidized bacteriochlorophyll in the photophosphorylation pathway. However, it may also have a role in the respiratory chain and is found in some non-photosynthetic bacteria. The protein is Cytochrome c2 of Rhodoblastus acidophilus (Rhodopseudomonas acidophila).